Consider the following 508-residue polypeptide: Maturase K (508 aa).

Belongs to the intron maturase 2 family. MatK subfamily.

Its subcellular location is the plastid. The protein resides in the chloroplast. Usually encoded in the trnK tRNA gene intron. Probably assists in splicing its own and other chloroplast group II introns. In Huidobria chilensis (Loasa chilensis), this protein is Maturase K.